Here is a 367-residue protein sequence, read N- to C-terminus: Germination protease (367 aa).

The propeptide occupies 1 to 13 (MEEQQIPFQVRTD). The disordered stretch occupies residues 267–287 (KDDPSKSLTPAGMSFGNRKLT).

Belongs to the peptidase A25 family. In terms of assembly, homotetramer. Post-translationally, autoproteolytically processed. The inactive tetrameric zymogen termed p46 autoprocesses to a smaller form termed p41, which is active only during spore germination.

The catalysed reaction is Endopeptidase action with P4 Glu or Asp, P1 preferably Glu &gt; Asp, P1' hydrophobic and P2' Ala.. Its function is as follows. Initiates the rapid degradation of small, acid-soluble proteins during spore germination. This is Germination protease from Oceanobacillus iheyensis (strain DSM 14371 / CIP 107618 / JCM 11309 / KCTC 3954 / HTE831).